Reading from the N-terminus, the 344-residue chain is uncharacterized protein (344 aa).

6 helical membrane-spanning segments follow: residues 155-175 (IARI…IFLV), 181-201 (WGLG…AYGW), 221-241 (LSFI…VNGF), 254-274 (ISSF…FALL), 291-311 (FTII…AAYV), and 319-339 (ALQN…IGVF).

To M.jannaschii MJ1032.

The protein localises to the cell membrane. This is an uncharacterized protein from Archaeoglobus fulgidus (strain ATCC 49558 / DSM 4304 / JCM 9628 / NBRC 100126 / VC-16).